The following is a 437-amino-acid chain: GTPase Era, mitochondrial (437 aa).

Residues 1–20 (MAAPRRYFPGIVRALLGAWQ) constitute a mitochondrion transit peptide. An Era-type G domain is found at 112–330 (RVLRVVLLGA…QYLLTQAQPG (219 aa)). The segment at 120-127 (GAPNAGKS) is G1. 120–127 (GAPNAGKS) serves as a coordination point for GTP. Residues 146–150 (HTTRC) are G2. The segment at 167 to 170 (DTPG) is G3. A GTP-binding site is contributed by 167–171 (DTPGI). Residue Ser173 is modified to Phosphoserine. 236–239 (NKVD) provides a ligand contact to GTP. The interval 236–239 (NKVD) is G4. Residues 272-293 (SRPSTHCPGPETEDPNTHAVRS) form a disordered region. Residues 308-310 (LSA) form a G5 region. Positions 360–437 (LPEEVPYSVQ…LLRLSVKLLK (78 aa)) constitute a KH type-2 domain.

It belongs to the TRAFAC class TrmE-Era-EngA-EngB-Septin-like GTPase superfamily. Era GTPase family.

It is found in the mitochondrion matrix. The protein localises to the mitochondrion inner membrane. Probable GTPase that plays a role in the mitochondrial ribosomal small subunit assembly. Specifically binds the 12S mitochondrial rRNA (12S mt-rRNA) to a 33 nucleotide section delineating the 3' terminal stem-loop region. May act as a chaperone that protects the 12S mt-rRNA on the 28S mitoribosomal subunit during ribosomal small subunit assembly. This Rattus norvegicus (Rat) protein is GTPase Era, mitochondrial (Eral1).